A 613-amino-acid chain; its full sequence is 4-hydroxy-3-methylbut-2-en-1-yl diphosphate synthase (flavodoxin) (613 aa).

[4Fe-4S] cluster is bound by residues C521, C524, C555, and E562.

Belongs to the IspG family. The cofactor is [4Fe-4S] cluster.

The catalysed reaction is (2E)-4-hydroxy-3-methylbut-2-enyl diphosphate + oxidized [flavodoxin] + H2O + 2 H(+) = 2-C-methyl-D-erythritol 2,4-cyclic diphosphate + reduced [flavodoxin]. Its pathway is isoprenoid biosynthesis; isopentenyl diphosphate biosynthesis via DXP pathway; isopentenyl diphosphate from 1-deoxy-D-xylulose 5-phosphate: step 5/6. Converts 2C-methyl-D-erythritol 2,4-cyclodiphosphate (ME-2,4cPP) into 1-hydroxy-2-methyl-2-(E)-butenyl 4-diphosphate. The chain is 4-hydroxy-3-methylbut-2-en-1-yl diphosphate synthase (flavodoxin) from Bacteroides thetaiotaomicron (strain ATCC 29148 / DSM 2079 / JCM 5827 / CCUG 10774 / NCTC 10582 / VPI-5482 / E50).